A 252-amino-acid polypeptide reads, in one-letter code: Small ribosomal subunit protein uS3 (252 aa).

The KH type-2 domain occupies 39 to 109; the sequence is IRNYVQTRLK…EVKIDVVEVV (71 aa). A compositionally biased stretch (basic and acidic residues) spans 221–241; that stretch reads EMKRIKERRSDSGPRSRNDRS. The interval 221–252 is disordered; it reads EMKRIKERRSDSGPRSRNDRSQKRRRRPNDRG. Over residues 242–252 the composition is skewed to basic residues; sequence QKRRRRPNDRG.

The protein belongs to the universal ribosomal protein uS3 family. Part of the 30S ribosomal subunit. Forms a tight complex with proteins S10 and S14.

Binds the lower part of the 30S subunit head. Binds mRNA in the 70S ribosome, positioning it for translation. The protein is Small ribosomal subunit protein uS3 of Chlorobium luteolum (strain DSM 273 / BCRC 81028 / 2530) (Pelodictyon luteolum).